The primary structure comprises 227 residues: 2-C-methyl-D-erythritol 4-phosphate cytidylyltransferase (227 aa).

This sequence belongs to the IspD/TarI cytidylyltransferase family. IspD subfamily.

The enzyme catalyses 2-C-methyl-D-erythritol 4-phosphate + CTP + H(+) = 4-CDP-2-C-methyl-D-erythritol + diphosphate. It functions in the pathway isoprenoid biosynthesis; isopentenyl diphosphate biosynthesis via DXP pathway; isopentenyl diphosphate from 1-deoxy-D-xylulose 5-phosphate: step 2/6. Its function is as follows. Catalyzes the formation of 4-diphosphocytidyl-2-C-methyl-D-erythritol from CTP and 2-C-methyl-D-erythritol 4-phosphate (MEP). In Caldanaerobacter subterraneus subsp. tengcongensis (strain DSM 15242 / JCM 11007 / NBRC 100824 / MB4) (Thermoanaerobacter tengcongensis), this protein is 2-C-methyl-D-erythritol 4-phosphate cytidylyltransferase.